The following is an 843-amino-acid chain: MPLSYQHFRKLLLLDDEAGPLEEELPRLADEGLNRRVAEDLNLGNLNVSIPWTHKVGNFTGLYSSTVPVFNPDWKTPSFPHIHLQEDIINRCQQYVGPLTVNEKRRLKLIMPARFYPNLTKYLPLDKGIKPYYPEYAVNHYFKTRHYLHTLWKAGILYKRETTRSASFCGSPYSWEQELQHGRLVFQTSTRHGDESFCSQSSGILSRSPVGPCVRSQLKQSRLGLQPQQGSLARGKSGRSGSIWSRVHPTTRRPFGVEPSGSGHIDNTASSTSSCLHQSAVRKTAYSHLSTSKRQSSSGHAVELHNIPPSSARSQSEGPIFSCWWLQFRNSKPCSDYCLTHIVNLLEDWGPCTEHGEHNIRIPRTPARVTGGVFLVDKNPHNTTESRLVVDFSQFSRGSTHVSWPKFAVPNLQSLTNLLSSNLSWLSLDVSAAFYHIPLHPAAMPHLLVGSSGLPRYVARLSSTSRNINYQHGTMQNLHDSCSRNLYVSLLLLYKTFGRKLHLYSHPIILGFRKIPMGVGLSPFLLAQFTSAICSVVRRAFPHCLAFSYMDDVVLGAKSVQHLESLFTSITNFLLSLGIHLNPNKTKRWGYSLNFMGYVIGSWGTLPQEHIVQKLKQCFRKLPVNRPIDWKVCQRIVGLLGFAAPFTQCGYPALMPLYACIQSKQAFTFSPTYKAFLCKQYLNLYPVARQRSGLCQVFADATPTGWGLAIGHRRMRGTFVAPLPIHTAELLAACFARSRSGAKLIGTDNSVVLSRKYTSFPWLLGCAANWILRGTSFVYVPSALNPADDPSRGRLGLYRPLLHLPFRPTTGRTSLYAVSPSVPSHLPDRVHFASPLHVAWRPP.

Residues Met-1–Gln-177 are terminal protein domain (TP). Positions Glu-178–Leu-346 are spacer. 2 disordered regions span residues Gly-224–Ser-273 and His-288–Ser-316. The span at His-288 to Gly-299 shows a compositional bias: polar residues. Residues Glu-347–Gln-690 are polymerase/reverse transcriptase domain (RT). In terms of domain architecture, Reverse transcriptase spans Glu-357–Ile-600. Mg(2+) contacts are provided by Asp-429, Asp-551, and Asp-552.

It belongs to the hepadnaviridae P protein family.

It carries out the reaction DNA(n) + a 2'-deoxyribonucleoside 5'-triphosphate = DNA(n+1) + diphosphate. The enzyme catalyses Endonucleolytic cleavage to 5'-phosphomonoester.. With respect to regulation, activated by host HSP70 and HSP40 in vitro to be able to bind the epsilon loop of the pgRNA. Because deletion of the RNase H region renders the protein partly chaperone-independent, the chaperones may be needed indirectly to relieve occlusion of the RNA-binding site by this domain. Inhibited by several reverse-transcriptase inhibitors: Lamivudine, Adefovir and Entecavir. Multifunctional enzyme that converts the viral RNA genome into dsDNA in viral cytoplasmic capsids. This enzyme displays a DNA polymerase activity that can copy either DNA or RNA templates, and a ribonuclease H (RNase H) activity that cleaves the RNA strand of RNA-DNA heteroduplexes in a partially processive 3'- to 5'-endonucleasic mode. Neo-synthesized pregenomic RNA (pgRNA) are encapsidated together with the P protein, and reverse-transcribed inside the nucleocapsid. Initiation of reverse-transcription occurs first by binding the epsilon loop on the pgRNA genome, and is initiated by protein priming, thereby the 5'-end of (-)DNA is covalently linked to P protein. Partial (+)DNA is synthesized from the (-)DNA template and generates the relaxed circular DNA (RC-DNA) genome. After budding and infection, the RC-DNA migrates in the nucleus, and is converted into a plasmid-like covalently closed circular DNA (cccDNA). The activity of P protein does not seem to be necessary for cccDNA generation, and is presumably released from (+)DNA by host nuclear DNA repair machinery. The protein is Protein P of Homo sapiens (Human).